A 223-amino-acid polypeptide reads, in one-letter code: Small ribosomal subunit protein uS3 (223 aa).

In terms of domain architecture, KH type-2 spans 39–107; sequence VREFLKQKLK…PVQVSVEEIR (69 aa).

The protein belongs to the universal ribosomal protein uS3 family. As to quaternary structure, part of the 30S ribosomal subunit. Forms a tight complex with proteins S10 and S14.

Binds the lower part of the 30S subunit head. Binds mRNA in the 70S ribosome, positioning it for translation. The polypeptide is Small ribosomal subunit protein uS3 (Methylococcus capsulatus (strain ATCC 33009 / NCIMB 11132 / Bath)).